The following is a 102-amino-acid chain: Small ribosomal subunit protein uS10 (102 aa).

It belongs to the universal ribosomal protein uS10 family. As to quaternary structure, part of the 30S ribosomal subunit.

Involved in the binding of tRNA to the ribosomes. This is Small ribosomal subunit protein uS10 from Kineococcus radiotolerans (strain ATCC BAA-149 / DSM 14245 / SRS30216).